The primary structure comprises 357 residues: MASTRNGISKDELLPTYELQSQRDVENSGSVTSFASKISNNAAAAVLAYCLSSISMTLVNKYVVSGASWNLSFLYLAIQSFIGTVAIMVCKKAGLIQNLGLFDLKKAQTWLPISLLLVGMIYTGNKALQFLSVPVYTIFKNLTIIVIAYGEVFMVGGSVKPLALLSFGLMVLSSVVAAWADIQIATAATAKASSDSAVATLSALNAGYAWMGTNVVFSASYALGMRRVIKKTNFDNWDVMFYNNLLSVPILLLSSLLVEDWSSENLQRNFPAESRQSLVIGIFYSGVAAIFISYCTAWCVRATSSTTYAMVGALNKLPLAVAGIVFFAAPVTFGSVSAIVLGFISGLVYTWAKSTGA.

The Cytoplasmic segment spans residues 1–43 (MASTRNGISKDELLPTYELQSQRDVENSGSVTSFASKISNNAA). The helical transmembrane segment at 44-64 (AAVLAYCLSSISMTLVNKYVV) threads the bilayer. Residues 65 to 68 (SGAS) are Lumenal-facing. A helical membrane pass occupies residues 69–89 (WNLSFLYLAIQSFIGTVAIMV). The Cytoplasmic segment spans residues 90 to 107 (CKKAGLIQNLGLFDLKKA). The chain crosses the membrane as a helical span at residues 108 to 128 (QTWLPISLLLVGMIYTGNKAL). Q129 is a topological domain (lumenal). The helical transmembrane segment at 130-150 (FLSVPVYTIFKNLTIIVIAYG) threads the bilayer. At 151–161 (EVFMVGGSVKP) the chain is on the cytoplasmic side. Residues 162–182 (LALLSFGLMVLSSVVAAWADI) traverse the membrane as a helical segment. Over 183–196 (QIATAATAKASSDS) the chain is Lumenal. The chain crosses the membrane as a helical span at residues 197–217 (AVATLSALNAGYAWMGTNVVF). Residues 218-238 (SASYALGMRRVIKKTNFDNWD) are Cytoplasmic-facing. A helical transmembrane segment spans residues 239-259 (VMFYNNLLSVPILLLSSLLVE). At 260–277 (DWSSENLQRNFPAESRQS) the chain is on the lumenal side. The chain crosses the membrane as a helical span at residues 278–298 (LVIGIFYSGVAAIFISYCTAW). At 299 to 306 (CVRATSST) the chain is on the cytoplasmic side. A helical transmembrane segment spans residues 307–327 (TYAMVGALNKLPLAVAGIVFF). Residues 328 to 332 (AAPVT) lie on the Lumenal side of the membrane. Residues 333 to 352 (FGSVSAIVLGFISGLVYTWA) form a helical membrane-spanning segment. The Cytoplasmic portion of the chain corresponds to 353-357 (KSTGA).

Belongs to the TPT transporter family. SLC35D subfamily. As to quaternary structure, homooligomer.

It is found in the golgi apparatus membrane. The protein localises to the cytoplasmic vesicle membrane. The protein resides in the endoplasmic reticulum membrane. In terms of biological role, involved in the import of GDP-mannose from the cytoplasm into the Golgi lumen. This chain is GDP-mannose transporter 2 (gmt2), found in Emericella nidulans (strain FGSC A4 / ATCC 38163 / CBS 112.46 / NRRL 194 / M139) (Aspergillus nidulans).